The following is a 523-amino-acid chain: MQLPRELKYAAIAGGVALFGLIFGWVLFPTILKSQLKKEMALSKKTDVRKMWEKIPFALDFKVYIFYFTNAEEVQKGATPILKEIGPYHFDEWKEKVEVEDHEEDDTITYKKRDVFYFNPEMSAPGLTGEEIVVIPHIFMLGMALTVARDKPAMLNMIGKAMNGIFDDPPDIFLRVKVLDILFRGMIINCARTEFAPKATCTALKKEGVSGLVLEPNNQFRFSIFGTRNNTIDPHVITVKRGITNVMDVGQVVAVDGKTEQTIWRDTCNEFQGTDGTVFPPFVPETERIESFSTDLCRTFKPWYQKKTSYRGIKTNRYIANIGDFANDPELNCYCSKPDTCPPKGLMDLAPCMKAPMYVSLPHFLDSDPALLTKVKGLNPDVTQHGIEIDYEPITGTPMVAKQRIQFNIQLLKTDKLDLFKDLSGDIVPLFWIDEGLSLNKTFVNMLKHQLFIPKRVVGVLRWWMVSFGSLGAVIGIVFHFRDHIMRLAVSGDTKVSKVIPEVEEQKDISVIGQAQEPAKVNI.

Topologically, residues 1-11 are cytoplasmic; it reads MQLPRELKYAA. A helical membrane pass occupies residues 12-32; it reads IAGGVALFGLIFGWVLFPTIL. Residues 33 to 458 lie on the Extracellular side of the membrane; sequence KSQLKKEMAL…HQLFIPKRVV (426 aa). N-linked (GlcNAc...) asparagine glycosylation is present at asparagine 229. Intrachain disulfides connect cysteine 268–cysteine 333, cysteine 297–cysteine 352, and cysteine 335–cysteine 341. A glycan (N-linked (GlcNAc...) asparagine) is linked at asparagine 440. A helical transmembrane segment spans residues 459 to 479; that stretch reads GVLRWWMVSFGSLGAVIGIVF. Residues 480–523 lie on the Cytoplasmic side of the membrane; sequence HFRDHIMRLAVSGDTKVSKVIPEVEEQKDISVIGQAQEPAKVNI.

Belongs to the CD36 family.

The protein resides in the cell membrane. Plays an olfactory role that is not restricted to pheromone sensitivity. The protein is Sensory neuron membrane protein 1 of Helicoverpa assulta (Oriental tobacco budworm).